We begin with the raw amino-acid sequence, 185 residues long: ATP synthase subunit delta (185 aa).

It belongs to the ATPase delta chain family. F-type ATPases have 2 components, F(1) - the catalytic core - and F(0) - the membrane proton channel. F(1) has five subunits: alpha(3), beta(3), gamma(1), delta(1), epsilon(1). F(0) has three main subunits: a(1), b(2) and c(10-14). The alpha and beta chains form an alternating ring which encloses part of the gamma chain. F(1) is attached to F(0) by a central stalk formed by the gamma and epsilon chains, while a peripheral stalk is formed by the delta and b chains.

It is found in the cell inner membrane. Functionally, f(1)F(0) ATP synthase produces ATP from ADP in the presence of a proton or sodium gradient. F-type ATPases consist of two structural domains, F(1) containing the extramembraneous catalytic core and F(0) containing the membrane proton channel, linked together by a central stalk and a peripheral stalk. During catalysis, ATP synthesis in the catalytic domain of F(1) is coupled via a rotary mechanism of the central stalk subunits to proton translocation. Its function is as follows. This protein is part of the stalk that links CF(0) to CF(1). It either transmits conformational changes from CF(0) to CF(1) or is implicated in proton conduction. This chain is ATP synthase subunit delta, found in Phocaeicola vulgatus (strain ATCC 8482 / DSM 1447 / JCM 5826 / CCUG 4940 / NBRC 14291 / NCTC 11154) (Bacteroides vulgatus).